The chain runs to 51 residues: Large ribosomal subunit protein bL33 (51 aa).

It belongs to the bacterial ribosomal protein bL33 family.

The sequence is that of Large ribosomal subunit protein bL33 from Ruthia magnifica subsp. Calyptogena magnifica.